The following is a 503-amino-acid chain: D-xylose-proton symporter-like 1 (503 aa).

Residues 1 to 23 (MGFDPENQSISSVGQVVGDSSSG) are disordered. Over residues 8–23 (QSISSVGQVVGDSSSG) the composition is skewed to low complexity. The next 12 membrane-spanning stretches (helical) occupy residues 51–73 (FLFPALGALLFGYEIGATSCAIM), 95–115 (IITSGSLYGALIGSIVAFSVA), 129–149 (FLYLVGAIVTVVAPVFSILII), 152–172 (VTYGMGIGLTMHAAPMYIAET), 190–210 (VLGMVGGYGIGSLWITVISGW), 213–233 (MYATILPFPVIMGTGMCWLPA), 305–325 (ALTIAGGLVLFQQITGQPSVL), 346–366 (ISILLGLLKLVMTGVSVIVID), 374–394 (LLCGVSGMVISLFLLGSYYMF), 405–425 (ALLLYVGCYQLSFGPIGWLMI), 437–457 (GISLAVLVNFGANALVTFAFS), and 467–487 (ILFCAFGVICVVSLFFIYYIV).

It belongs to the major facilitator superfamily. Sugar transporter (TC 2.A.1.1) family.

The protein localises to the membrane. This is D-xylose-proton symporter-like 1 from Arabidopsis thaliana (Mouse-ear cress).